Consider the following 196-residue polypeptide: Pro-FMRFamide-related neuropeptide VF (196 aa).

The signal sequence occupies residues 1–26 (MEIISSKLFILLTLATSSLLTSNIFC). Residues 27–55 (ADELVMSNLHSKENYDKYSEPRGYPKGER) constitute a propeptide that is removed on maturation. At phenylalanine 92 the chain carries Phenylalanine amide. 2 propeptides span residues 95–99 (NVQEE) and 115–121 (NMEVSLV). Phenylalanine 131 carries the post-translational modification Phenylalanine amide. The propeptide occupies 134–196 (TTTAKSVCRM…IDDAELKQEK (63 aa)).

The protein belongs to the FARP (FMRFamide related peptide) family. In terms of tissue distribution, specifically expressed in the retina. Detected in the hypothalamus.

The protein localises to the secreted. In terms of biological role, efficiently inhibits forskolin-induced production of cAMP. Acts as a potent negative regulator of gonadotropin synthesis and secretion. Induces secretion of prolactin. Efficiently inhibits forskolin-induced production of cAMP. Blocks morphine-induced analgesia. Functionally, shows no inhibitory activity of forskolin-induced production of cAMP. The sequence is that of Pro-FMRFamide-related neuropeptide VF from Homo sapiens (Human).